A 1431-amino-acid polypeptide reads, in one-letter code: 1-phosphatidylinositol 4,5-bisphosphate phosphodiesterase beta egl-8 (1431 aa).

Residues 340–491 (MDMDQPLCHY…LRKKILIKNK (152 aa)) enclose the PI-PLC X-box domain. Residue histidine 355 is part of the active site. 3 residues coordinate Ca(2+): asparagine 356, glutamate 385, and aspartate 387. Histidine 403 is an active-site residue. Ca(2+) is bound at residue glutamate 437. Lysine 489 and lysine 491 together coordinate substrate. Disordered stretches follow at residues 510-601 (KLDE…MVPD) and 632-692 (RRQS…SGPS). The span at 543–556 (EEVDDDTSDDDDDP) shows a compositional bias: acidic residues. Low complexity-rich tracts occupy residues 572 to 586 (NTTS…ARSS), 652 to 661 (SSSSPATPSI), and 668 to 692 (ATSS…SGPS). The 117-residue stretch at 758–874 (LSSLVNYTHP…GYLLKPDFLR (117 aa)) folds into the PI-PLC Y-box domain. Residues serine 787 and arginine 814 each contribute to the substrate site. The 126-residue stretch at 877–1002 (DRTFDPFSES…SLRSDTNQSF (126 aa)) folds into the C2 domain. Disordered stretches follow at residues 1072 to 1119 (QPPR…VAVD), 1150 to 1176 (DLRK…SSIA), and 1188 to 1216 (NNRR…SASG). The span at 1074 to 1113 (PRQNGSSADLLANNGQTGSARGDQTSSMASSTIRSPNEQP) shows a compositional bias: polar residues. Residues 1135–1166 (KAFAKLLKRFQKELDDLRKKHQKQRDSIQKQQ) adopt a coiled-coil conformation. Residues 1150 to 1162 (DLRKKHQKQRDSI) show a composition bias toward basic and acidic residues. Basic residues predominate over residues 1191-1200 (RSTKKEKGSR). Residues 1204 to 1216 (TASVSSGCGSASG) are compositionally biased toward low complexity. Coiled-coil stretches lie at residues 1288-1318 (DEEE…KNQM) and 1368-1402 (EKNL…QLEQ).

Requires Ca(2+) as cofactor. Expressed in most or all neurons with high expression in the head and tail ganglia and low expression in the motor neurons of the ventral cord. Expressed in the intestine (at protein level). In males, expressed in vas deferens, spicule protractor muscles, diagonal muscles and a male-specific neuron.

It localises to the perikaryon. The protein localises to the cell projection. The protein resides in the axon. Its subcellular location is the synapse. It is found in the cell junction. It localises to the adherens junction. The enzyme catalyses a 1,2-diacyl-sn-glycero-3-phospho-(1D-myo-inositol-4,5-bisphosphate) + H2O = 1D-myo-inositol 1,4,5-trisphosphate + a 1,2-diacyl-sn-glycerol + H(+). Its function is as follows. Mediates the production of the second messenger molecules diacylglycerol (DAG) and inositol 1,4,5-trisphosphate (IP3) which plays an important role in the regulation of intracellular signaling cascades. Required in the nervous system to modulate neuronal activity. Facilitates synaptic transmission at neuromuscular junctions by regulating the release of acetylcholine from the motor neurons and thus affecting locomotion. Plays a role in efficient egg laying and defecation. Involved in axon regeneration after injury. Plays a role in male mating behavior by regulating spicule insertion and sperm transfer. By triggering Ca(2+) transient via IP3-mediated activation of IPR3 receptor itr-1 in ASH sensory neurons, regulates avoidance behavior in response to nose touch. By activating tpa-1 via DAG production, required for the expression of antimicrobial peptide nlp-29 in response to fungal infection. During embryogenesis, may play a role in epidermal morphogenesis together with plc-1. This is 1-phosphatidylinositol 4,5-bisphosphate phosphodiesterase beta egl-8 from Caenorhabditis elegans.